An 872-amino-acid chain; its full sequence is Cilia- and flagella-associated protein 58 (872 aa).

Coiled coils occupy residues 106–595 (VDSA…ADGE) and 642–839 (ESQY…QKNK).

Belongs to the CFAP58 family. Interacts with ODFP2.

It is found in the cell projection. Its subcellular location is the cilium. The protein localises to the flagellum. It localises to the cytoplasm. The protein resides in the cytoskeleton. It is found in the microtubule organizing center. Its subcellular location is the centrosome. Its function is as follows. Has an essential role in the assembly and organization of the sperm flagellar axoneme. Required for the elongation of the primary cilium and sperm flagellar midpiece via modulation of the Notch signaling pathway. The sequence is that of Cilia- and flagella-associated protein 58 from Homo sapiens (Human).